The sequence spans 643 residues: Sodium/iodide cotransporter (643 aa).

At 1 to 14 (MEAVETGERPTFGA) the chain is on the extracellular side. A helical membrane pass occupies residues 15-31 (WDYGVFALMLLVSTGIG). Topologically, residues 32 to 56 (LWVGLARGGQRSAEDFFTGGRRLAA) are cytoplasmic. Residues 57 to 80 (LPVGLSLSASFMSAVQVLGVPSEA) traverse the membrane as a discontinuously helical segment. Residues Ser69, Val71, and Gln72 each contribute to the Na(+) site. Val76 serves as a coordination point for iodide. Over 81 to 84 (YRYG) the chain is Extracellular. A helical transmembrane segment spans residues 85–105 (LKFLWMCLGQLLNSVLTALLF). Met90 contacts iodide. Residues 106-130 (MPVFYRLGLTSTYEYLEMRFSRAVR) are Cytoplasmic-facing. Residues 131 to 157 (LCGTLQYIVATMLYTGIVIYAPALILN) form a helical membrane-spanning segment. Tyr144 contributes to the Na(+) binding site. Over 158–163 (QVTGLD) the chain is Extracellular. Residues 164 to 181 (IWASLLSTGIICTFYTAV) traverse the membrane as a helical segment. Over 182–189 (GGMKAVVW) the chain is Cytoplasmic. Residues 190 to 208 (TDVFQVVVMLSGFWVVLAR) traverse the membrane as a helical segment. Residues 209–243 (GVMLVGGPRQVLTLAQNHSRINLMDFNPDPRSRYT) lie on the Extracellular side of the membrane. A discontinuously helical membrane pass occupies residues 244-266 (FWTFVVGGTLVWLSMYGVNQAQV). Residue Trp255 coordinates iodide. Position 258 (Met258) interacts with Na(+). Residues 267-278 (QRYVACRTEKQA) lie on the Cytoplasmic side of the membrane. Residues 279–301 (KLALLINQVGLFLIVSSAACCGI) form a helical membrane-spanning segment. Over 302–335 (VMFVFYTDCDPLLLGRISAPDQYMPLLVLDIFED) the chain is Extracellular. Residues 336–363 (LPGVPGLFLACAYSGTLSTASTSINAMA) traverse the membrane as a helical segment. Residues 364–386 (AVTVEDLIKPRLRSLAPRKLVII) are Cytoplasmic-facing. The helical transmembrane segment at 387 to 408 (SKGLSLIYGSACLTVAALSSLL) threads the bilayer. The Extracellular segment spans residues 409–411 (GGG). The helical transmembrane segment at 412-437 (VLQGSFTVMGVISGPLLGAFILGMFL) threads the bilayer. Leu413 is an iodide binding site. Ser416 and Phe417 together coordinate Na(+). Position 417 (Phe417) interacts with iodide. The Cytoplasmic segment spans residues 438-441 (PACN). Residues 442-465 (TPGVLAGLGAGLALSLWVALGATL) form a helical membrane-spanning segment. The Extracellular segment spans residues 466–525 (YPPSEQTMRVLPSSAARCVALSVNASGLLDPALLPANDSSRAPSSGMDASRPALADSFYA). 2 N-linked (GlcNAc...) asparagine glycosylation sites follow: Asn489 and Asn502. A helical membrane pass occupies residues 526-550 (ISYLYYGALGTLTTVLCGALISCLT). The Cytoplasmic portion of the chain corresponds to 551 to 643 (GPTKRSTLAP…GGRDQQETNL (93 aa)). Ser556 is modified (phosphoserine; by PKA). Residues 623–643 (AGSWTPCVGHDGGRDQQETNL) are disordered. The segment covering 633 to 643 (DGGRDQQETNL) has biased composition (basic and acidic residues).

It belongs to the sodium:solute symporter (SSF) (TC 2.A.21) family. In terms of assembly, monomer. Post-translationally, glycosylated. As to expression, expression is primarily in thyroid tissue, but also to a lower extent in mammary gland and ovary. Expression is reduced in tumors.

The protein localises to the cell membrane. It localises to the cytoplasm. The enzyme catalyses iodide(out) + 2 Na(+)(out) = iodide(in) + 2 Na(+)(in). It carries out the reaction chlorate(out) + 2 Na(+)(out) = chlorate(in) + 2 Na(+)(in). The catalysed reaction is thiocyanate(out) + 2 Na(+)(out) = thiocyanate(in) + 2 Na(+)(in). It catalyses the reaction nitrate(out) + 2 Na(+)(out) = nitrate(in) + 2 Na(+)(in). The enzyme catalyses selenocyanate(out) + 2 Na(+)(out) = selenocyanate(in) + 2 Na(+)(in). Its activity is regulated as follows. Dysidenin and perchlorate inhibit iodide transport activity. Oxyanions inhibit iodide transport activity by blocking the binding sites for iodide and one of the sodium ions. In terms of biological role, sodium:iodide symporter that mediates the transport of iodide into the thyroid gland. Can also mediate the transport of chlorate, thiocynate, nitrate and selenocynate. This Homo sapiens (Human) protein is Sodium/iodide cotransporter (SLC5A5).